A 258-amino-acid polypeptide reads, in one-letter code: Indole-3-glycerol phosphate synthase (258 aa).

It belongs to the TrpC family.

It carries out the reaction 1-(2-carboxyphenylamino)-1-deoxy-D-ribulose 5-phosphate + H(+) = (1S,2R)-1-C-(indol-3-yl)glycerol 3-phosphate + CO2 + H2O. The protein operates within amino-acid biosynthesis; L-tryptophan biosynthesis; L-tryptophan from chorismate: step 4/5. This is Indole-3-glycerol phosphate synthase from Chlorobium limicola (strain DSM 245 / NBRC 103803 / 6330).